Here is a 543-residue protein sequence, read N- to C-terminus: Alanine aminotransferase 1, mitochondrial (543 aa).

Residues 1–55 constitute a mitochondrion transit peptide; the sequence is MRRFVIGQAKNLIDQSRRRQLHHHKNLSFVSLIPPFSAPSDSSSRHLSSSSSSDM. Over residues 43 to 63 the composition is skewed to low complexity; the sequence is SSRHLSSSSSSDMSASDSSSS. Positions 43–64 are disordered; that stretch reads SSRHLSSSSSSDMSASDSSSSL. N-acetylserine is present on Ser56. Pyridoxal 5'-phosphate contacts are provided by residues Tyr173, 209-210, Tyr235, Asn291, Tyr322, and 354-356; these read AS and SFQ. At Lys360 the chain carries N6-(pyridoxal phosphate)lysine. Residues Arg369 and Asn397 each contribute to the pyridoxal 5'-phosphate site.

This sequence belongs to the class-I pyridoxal-phosphate-dependent aminotransferase family. Alanine aminotransferase subfamily. Homodimer. Pyridoxal 5'-phosphate is required as a cofactor. Post-translationally, the N-terminus is blocked. As to expression, mostly expressed in roots and shoots, mostly in vascular tissues, and, to a lower extent, in flowers and leaves.

The protein localises to the mitochondrion. The catalysed reaction is L-alanine + 2-oxoglutarate = pyruvate + L-glutamate. Its pathway is photosynthesis; C4 acid pathway. It participates in amino-acid degradation; L-alanine degradation via transaminase pathway; pyruvate from L-alanine: step 1/1. In terms of biological role, is the major alanine aminotransferase in roots that catalyzes the conversion of alanine to pyruvate. Involved in the rapid conversion of alanine to pyruvate during recovery from low-oxygen stress. In Arabidopsis thaliana (Mouse-ear cress), this protein is Alanine aminotransferase 1, mitochondrial.